Reading from the N-terminus, the 246-residue chain is Complement C1q tumor necrosis factor-related protein 3 (246 aa).

The signal sequence occupies residues 1 to 22 (MLGRQRIWWHLLPLLFLPFCLC). One can recognise a Collagen-like domain in the interval 51-113 (GYQGPPGPPG…KGEKGYPGVP (63 aa)). A disordered region spans residues 53 to 112 (QGPPGPPGPPGIPGNHGNNGNNGATGHEGAKGEKGDKGDLGPRGERGQHGPKGEKGYPGV). Positions 55-64 (PPGPPGPPGI) are enriched in pro residues. Residues 65–74 (PGNHGNNGNN) are compositionally biased toward low complexity. The segment covering 80–107 (EGAKGEKGDKGDLGPRGERGQHGPKGEK) has biased composition (basic and acidic residues). One can recognise a C1q domain in the interval 113–246 (PPELQIAFMA…FAGFLLFETK (134 aa)).

It is found in the secreted. The protein is Complement C1q tumor necrosis factor-related protein 3 (C1qtnf3) of Mus musculus (Mouse).